The chain runs to 95 residues: Aspartyl/glutamyl-tRNA(Asn/Gln) amidotransferase subunit C (95 aa).

This sequence belongs to the GatC family. In terms of assembly, heterotrimer of A, B and C subunits.

The enzyme catalyses L-glutamyl-tRNA(Gln) + L-glutamine + ATP + H2O = L-glutaminyl-tRNA(Gln) + L-glutamate + ADP + phosphate + H(+). The catalysed reaction is L-aspartyl-tRNA(Asn) + L-glutamine + ATP + H2O = L-asparaginyl-tRNA(Asn) + L-glutamate + ADP + phosphate + 2 H(+). In terms of biological role, allows the formation of correctly charged Asn-tRNA(Asn) or Gln-tRNA(Gln) through the transamidation of misacylated Asp-tRNA(Asn) or Glu-tRNA(Gln) in organisms which lack either or both of asparaginyl-tRNA or glutaminyl-tRNA synthetases. The reaction takes place in the presence of glutamine and ATP through an activated phospho-Asp-tRNA(Asn) or phospho-Glu-tRNA(Gln). The protein is Aspartyl/glutamyl-tRNA(Asn/Gln) amidotransferase subunit C of Cereibacter sphaeroides (strain ATCC 17023 / DSM 158 / JCM 6121 / CCUG 31486 / LMG 2827 / NBRC 12203 / NCIMB 8253 / ATH 2.4.1.) (Rhodobacter sphaeroides).